Consider the following 146-residue polypeptide: Kappa-casein (146 aa).

O-linked (GalNAc...) threonine glycans are attached at residues threonine 97, threonine 107, threonine 112, and threonine 118. Residue threonine 121 is modified to Phosphothreonine. Phosphoserine; alternate is present on serine 125. An O-linked (GalNAc...) serine; alternate glycan is attached at serine 125. O-linked (GalNAc...) threonine glycosylation is present at threonine 142. Serine 143 bears the Phosphoserine mark.

It belongs to the kappa-casein family. Mammary gland specific. Secreted in milk.

The protein resides in the secreted. In terms of biological role, kappa-casein stabilizes micelle formation, preventing casein precipitation in milk. This chain is Kappa-casein (CSN3), found in Panthera uncia (Snow leopard).